The chain runs to 423 residues: Glucose-1-phosphate adenylyltransferase (423 aa).

Alpha-D-glucose 1-phosphate-binding positions include Tyr-110, Gly-175, 190–191 (EK), and Ser-208.

It belongs to the bacterial/plant glucose-1-phosphate adenylyltransferase family. As to quaternary structure, homotetramer.

The catalysed reaction is alpha-D-glucose 1-phosphate + ATP + H(+) = ADP-alpha-D-glucose + diphosphate. It functions in the pathway glycan biosynthesis; glycogen biosynthesis. Functionally, involved in the biosynthesis of ADP-glucose, a building block required for the elongation reactions to produce glycogen. Catalyzes the reaction between ATP and alpha-D-glucose 1-phosphate (G1P) to produce pyrophosphate and ADP-Glc. This chain is Glucose-1-phosphate adenylyltransferase, found in Nitrosococcus oceani (strain ATCC 19707 / BCRC 17464 / JCM 30415 / NCIMB 11848 / C-107).